Consider the following 381-residue polypeptide: MLTEEELIQIRRHLHQIPELALQEFDTHQYLVETIAGFNQAFLEVRTFKELPTALMVLVHGKNPQRTIGYRTDIDALPVEEQTGLPYSSTHPGVMHACGHDIHMTVALGVLNYFSEHQPQDNILFFFQPAEESENGGKRAYELGLFSGKWKPDEFYGLHDNPDLPAGAIGCRMGTLFAGTTEVNIDLNGKGGHAAYPQNANDTVVAAASLILQVQTVISRSIDPIQSGVITLGKIDGGTIRNVIAGHTRIEGTIRGLTQTMIETIDNRLKDVCEGIGCSFNMDVSLELNQGGYWPVENNPELTKRFIHYMEETPTVNFIETEPAMTGEDFGYLLAKFPGTMFWLGVEDDSQLHSATLTPNEKAIKRGVDAITGFLEYRMQN.

Residue aspartate 73 is part of the active site. Catalysis depends on glutamate 132, which acts as the Proton acceptor.

It belongs to the peptidase M20A family. N-acetyldiaminopimelate deacetylase subfamily.

The catalysed reaction is N-acetyl-(2S,6S)-2,6-diaminopimelate + H2O = (2S,6S)-2,6-diaminopimelate + acetate. It functions in the pathway amino-acid biosynthesis; L-lysine biosynthesis via DAP pathway; LL-2,6-diaminopimelate from (S)-tetrahydrodipicolinate (acetylase route): step 3/3. In terms of biological role, catalyzes the conversion of N-acetyl-diaminopimelate to diaminopimelate and acetate. In Limosilactobacillus reuteri (strain DSM 20016) (Lactobacillus reuteri), this protein is N-acetyldiaminopimelate deacetylase.